The primary structure comprises 644 residues: MDNDGPRSMTIGDDFQENFCERLERIHNTLHSINDCNSLNESTTSISETLLVQFYDDLENVASVIPDLVNKKRLGKDDILLFMDWLLLKKYMLYQFISDVHNIEEGFAHLLDLLEDEFSKDDQDSDKYNRFSPMFDVIEESTQIKTQLEPWLTNLKELLDTSLEFNEISKDHMDTLHKIINSNISYCLEIQEERFASPIRHTPSFTLEQLVKLLGTHTETTEPKVPKFSPAEDILSRKFLNLKKNIPPIEKSLTDILPQRIVQFGHRNITNITTLQTILQKKYELIMKDYRFMNSEFRELKVELIDKRWNILFINLNHELLYILDEIERLQSKLLTTKYTKDITIRLERQLERKSKTVSKTFNIIYRALEFSLLDAGVASKTNELAQRWLNIKPTADKILIKSSASNKIATSKKKIPKPKSLGFGRPNSVIGTITQDFQERVAINEGDSNKTPENSTTVALKGKKLGKALLQKMNIKPATSPNSSNAINPFFDPESPNKGKLILSSVPPLPYDETDETTLRVSRGENEKSPDSFITSRHENKVQITETPLMAKNKSVLDIEKDKWNHYRSLPSRIPIYKDKVVKVTVENTPIAKVFQTPPTKITTPNSQVWVPSTRRRTRLRPPTPLSQLLSPREGRLDKTPTY.

The residue at position 496 (Ser496) is a Phosphoserine. 2 disordered regions span residues 506–534 (SVPPLPYDETDETTLRVSRGENEKSPDSF) and 606–644 (PNSQVWVPSTRRRTRLRPPTPLSQLLSPREGRLDKTPTY). Basic and acidic residues-rich tracts occupy residues 523-534 (SRGENEKSPDSF) and 634-644 (REGRLDKTPTY).

The protein resides in the nucleus. It localises to the cytoplasm. Its subcellular location is the cytoskeleton. In terms of biological role, involved in karyogamy. Component of a cortical adaptor complex that orients cytoplasmic microtubules. It may be involved in anchoring cytoplasmic microtubules to the cell cortex. The chain is Karyogamy protein KAR9 (KAR9) from Saccharomyces cerevisiae (strain ATCC 204508 / S288c) (Baker's yeast).